We begin with the raw amino-acid sequence, 309 residues long: uncharacterized protein (309 aa).

A helical transmembrane segment spans residues 23–43 (ALVLSSIVNILLLLLIYSTVF).

This sequence belongs to the chlamydial CPn_0593/CT_474/TC_0759 family.

The protein localises to the membrane. This is an uncharacterized protein from Chlamydia trachomatis serovar D (strain ATCC VR-885 / DSM 19411 / UW-3/Cx).